Reading from the N-terminus, the 910-residue chain is Protein translocase subunit SecA (910 aa).

ATP-binding positions include Gln87, 105 to 109 (GEGKT), and Asp508. A compositionally biased stretch (basic and acidic residues) spans 558 to 568 (RHESRRIDNQL). 2 disordered regions span residues 558-580 (RHES…DPGS) and 873-910 (AAQQ…GQLS). Residues Cys894, Cys896, Cys905, and His906 each coordinate Zn(2+). Over residues 900-910 (KKYKHCHGQLS) the composition is skewed to basic residues.

It belongs to the SecA family. Monomer and homodimer. Part of the essential Sec protein translocation apparatus which comprises SecA, SecYEG and auxiliary proteins SecDF-YajC and YidC. Zn(2+) serves as cofactor.

It is found in the cell inner membrane. The protein resides in the cytoplasm. It catalyses the reaction ATP + H2O + cellular proteinSide 1 = ADP + phosphate + cellular proteinSide 2.. Functionally, part of the Sec protein translocase complex. Interacts with the SecYEG preprotein conducting channel. Has a central role in coupling the hydrolysis of ATP to the transfer of proteins into and across the cell membrane, serving both as a receptor for the preprotein-SecB complex and as an ATP-driven molecular motor driving the stepwise translocation of polypeptide chains across the membrane. The polypeptide is Protein translocase subunit SecA (Stenotrophomonas maltophilia (strain R551-3)).